Consider the following 424-residue polypeptide: Trigger factor (424 aa).

The region spanning Gly163–Pro248 is the PPIase FKBP-type domain.

It belongs to the FKBP-type PPIase family. Tig subfamily.

Its subcellular location is the cytoplasm. It catalyses the reaction [protein]-peptidylproline (omega=180) = [protein]-peptidylproline (omega=0). In terms of biological role, involved in protein export. Acts as a chaperone by maintaining the newly synthesized protein in an open conformation. Functions as a peptidyl-prolyl cis-trans isomerase. This chain is Trigger factor, found in Bacillus licheniformis (strain ATCC 14580 / DSM 13 / JCM 2505 / CCUG 7422 / NBRC 12200 / NCIMB 9375 / NCTC 10341 / NRRL NRS-1264 / Gibson 46).